The primary structure comprises 227 residues: Ubiquitin domain-containing protein 1 (227 aa).

The segment covering 1 to 14 (MGGCVGRERAETRG) has biased composition (basic and acidic residues). Positions 1–45 (MGGCVGRERAETRGRGSRTQRKRGGRNEPLKKDKPKWKSDYPMTE) are disordered. Positions 15–24 (RGSRTQRKRG) are enriched in basic residues. A compositionally biased stretch (basic and acidic residues) spans 25 to 39 (GRNEPLKKDKPKWKS). The Ubiquitin-like domain occupies 150–225 (FQLKVRLSTG…IQVIVNQPAP (76 aa)).

May be involved in the regulation of cellular senescence through a positive feedback loop with TP53. This is Ubiquitin domain-containing protein 1 (ubtd1) from Danio rerio (Zebrafish).